The following is a 297-amino-acid chain: Mitochondrial nicotinamide adenine dinucleotide transporter SLC25A52 (297 aa).

3 Solcar repeats span residues 28–108 (VGEM…LSCL), 116–200 (PEFA…IKEH), and 209–296 (AHLV…LLKF). Helical transmembrane passes span 34–51 (YLCG…TYPI), 85–105 (LPPL…YEDL), 118–138 (FATH…FTPL), 179–199 (ILFR…PIKE), 215–235 (FIGG…INVV), and 268–289 (LFRG…INAT).

This sequence belongs to the mitochondrial carrier (TC 2.A.29) family.

The protein localises to the mitochondrion inner membrane. The catalysed reaction is NAD(+)(in) = NAD(+)(out). Functionally, mitochondrial membrane carrier protein that mediates the import of NAD(+) into mitochondria. Compared to SLC25A51, SLC25A52-mediated transport is not essential for the import of NAD(+) in mitochondria. The transport mechanism, uniport or antiport, its electrogenicity and substrate selectivity, remain to be elucidated. The protein is Mitochondrial nicotinamide adenine dinucleotide transporter SLC25A52 of Homo sapiens (Human).